A 305-amino-acid polypeptide reads, in one-letter code: Elongation factor Ts, mitochondrial (305 aa).

It belongs to the EF-Ts family.

The protein resides in the mitochondrion. Functionally, associates with the EF-Tu.GDP complex and induces the exchange of GDP to GTP. It remains bound to the aminoacyl-tRNA.EF-Tu.GTP complex up to the GTP hydrolysis stage on the ribosome. The polypeptide is Elongation factor Ts, mitochondrial (tsfm) (Danio rerio (Zebrafish)).